We begin with the raw amino-acid sequence, 208 residues long: Intraflagellar transport protein 43 homolog (208 aa).

Residue Met1 is modified to N-acetylmethionine. The segment at 18–65 (SRAKMGRRAQQESAQAENHLNGKNSSLTLTGETSSAKLPRCRQGGWAG) is disordered. Positions 28 to 53 (QESAQAENHLNGKNSSLTLTGETSSA) are enriched in polar residues. Residue Ser78 is modified to Phosphoserine.

It belongs to the IFT43 family. Component of the IFT complex A (IFT-A) complex. IFT-A complex is divided into a core subcomplex composed of IFT122:IFT140:WDR19 which is associated with TULP3 and a peripheral subcomplex composed of IFT43:WDR35:TTC21B. Interacts directy with IFT122, WDR35 and TTC21B. As to expression, expressed in the retina, predominantly in the photoreceptor outer segment.

Its subcellular location is the cytoplasm. The protein resides in the cytoskeleton. It localises to the cell projection. The protein localises to the cilium. Its function is as follows. As a component of IFT complex A (IFT-A), a complex required for retrograde ciliary transport and entry into cilia of G protein-coupled receptors (GPCRs), it is involved in ciliogenesis. Involved in retrograde ciliary transport along microtubules from the ciliary tip to the base. The polypeptide is Intraflagellar transport protein 43 homolog (Homo sapiens (Human)).